Reading from the N-terminus, the 188-residue chain is Threonylcarbamoyl-AMP synthase (188 aa).

Residues 4-188 (VENLQQAVDA…ARSLQVLRQG (185 aa)) enclose the YrdC-like domain.

Belongs to the SUA5 family. TsaC subfamily.

It is found in the cytoplasm. It carries out the reaction L-threonine + hydrogencarbonate + ATP = L-threonylcarbamoyladenylate + diphosphate + H2O. Its function is as follows. Required for the formation of a threonylcarbamoyl group on adenosine at position 37 (t(6)A37) in tRNAs that read codons beginning with adenine. Catalyzes the conversion of L-threonine, HCO(3)(-)/CO(2) and ATP to give threonylcarbamoyl-AMP (TC-AMP) as the acyladenylate intermediate, with the release of diphosphate. The chain is Threonylcarbamoyl-AMP synthase from Vibrio cholerae serotype O1 (strain ATCC 39541 / Classical Ogawa 395 / O395).